We begin with the raw amino-acid sequence, 124 residues long: Sporulation initiation phosphotransferase F (124 aa).

Residues 5–119 (KILIVDDQYG…EIRDAVKKYL (115 aa)) form the Response regulatory domain. Positions 10, 11, 54, and 56 each coordinate Mg(2+). A 4-aspartylphosphate modification is found at Asp54.

Mg(2+) is required as a cofactor. Post-translationally, phosphorylated by KinA and KinB. Dephosphorylated by RapA and RapB.

Its subcellular location is the cytoplasm. Its function is as follows. Key element in the phosphorelay regulating sporulation initiation. Phosphorylation of spo0B during sporulation initiation. In Bacillus subtilis (strain 168), this protein is Sporulation initiation phosphotransferase F (spo0F).